A 608-amino-acid chain; its full sequence is Scaffold protein salvador (608 aa).

6 disordered regions span residues 17 to 37 (SRRN…YMKK), 64 to 145 (STSP…SQNS), 157 to 202 (MRRQ…YDAD), 220 to 243 (PHSP…QQHA), 264 to 293 (QPRY…HTQL), and 345 to 425 (PQHH…ELPL). Basic and acidic residues predominate over residues 22-37 (EKSQHKEGVVGKYMKK). A Ferm-binding motif (FBM) motif is present at residues 32 to 38 (GKYMKKD). The segment covering 64–89 (STSPSCEFHPRSSSTSRNTYSCTDSQ) has biased composition (polar residues). Positions 108 to 125 (SHSHPHSLPHPSHPHVRS) are enriched in basic residues. Low complexity-rich tracts occupy residues 160 to 172 (QQSS…TSSP), 229 to 242 (PPQQ…HQQH), and 275 to 289 (QQQQ…QQLQ). A coiled-coil region spans residues 274–294 (MQQQQQQQQQQQQQLQHTQLA). Residues 358 to 373 (GSGGGSLSGSGRGGSS) show a composition bias toward gly residues. Phosphoserine is present on residues serine 413 and serine 416. 2 consecutive WW domains span residues 423-456 (LPLP…HPLE) and 458-491 (EGLP…HPCL). An SARAH domain is found at 552–599 (LLQFNMFSLPELEGFDSMLVRLFKQELGTIVGFYERYRRALILEKNRR).

In terms of assembly, interacts with Wts via its WW domains. Interacts (via FBM motif) with Mer (via FERM domain). Interacts with Kibra. Interacts with Hpo (via SARAH domain). Interacts with jub. Post-translationally, phosphorylated by Hpo. As to expression, third instar larvae eye disk, expressed in a stripe in the morphogenetic furrow, decreases in the region of the second mitotic wave (SMW) and increases once again posterior to the SMW.

Its function is as follows. Plays a key role in the Hippo/SWH (Sav/Wts/Hpo) signaling pathway, a signaling pathway that plays a pivotal role in organ size control and tumor suppression by restricting proliferation and promoting apoptosis. The core of this pathway is composed of a kinase cascade wherein Hippo (Hpo), in complex with its regulatory protein Salvador (Sav), phosphorylates and activates Warts (Wts) in complex with its regulatory protein Mats, which in turn phosphorylates and inactivates the Yorkie (Yki) oncoprotein. The Hippo/SWH signaling pathway inhibits the activity of the transcriptional complex formed by Scalloped (sd) and Yki and the target genes of this pathway include cyclin-E (cycE), diap1 and bantam. Required for cell cycle exit in eye imaginal disk and hid-induced apoptotic cell deaths that are part of normal retinal development. Activation of Drice in eye imaginal disk by either Hid or Rpr is almost completely blocked by Sav expression. This chain is Scaffold protein salvador (sav), found in Drosophila melanogaster (Fruit fly).